A 123-amino-acid chain; its full sequence is Small ribosomal subunit protein uS12 (123 aa).

Asp89 carries the 3-methylthioaspartic acid modification.

This sequence belongs to the universal ribosomal protein uS12 family. Part of the 30S ribosomal subunit. Contacts proteins S8 and S17. May interact with IF1 in the 30S initiation complex.

Its function is as follows. With S4 and S5 plays an important role in translational accuracy. Functionally, interacts with and stabilizes bases of the 16S rRNA that are involved in tRNA selection in the A site and with the mRNA backbone. Located at the interface of the 30S and 50S subunits, it traverses the body of the 30S subunit contacting proteins on the other side and probably holding the rRNA structure together. The combined cluster of proteins S8, S12 and S17 appears to hold together the shoulder and platform of the 30S subunit. This is Small ribosomal subunit protein uS12 from Syntrophobacter fumaroxidans (strain DSM 10017 / MPOB).